The following is a 485-amino-acid chain: Noelin (485 aa).

The N-terminal stretch at 1-24 (MSVPLLKIGVVLSTMAMITNWMSQ) is a signal peptide. Asparagine 33, asparagine 103, asparagine 187, asparagine 288, asparagine 307, asparagine 394, asparagine 431, and asparagine 473 each carry an N-linked (GlcNAc...) asparagine glycan. Positions 87–225 (RDARTKQLRQ…ERLRACMQKL (139 aa)) form a coiled coil. The 253-residue stretch at 226 to 478 (ACGKLTGISD…QTLYNVTLFH (253 aa)) folds into the Olfactomedin-like domain. Cysteine 227 and cysteine 409 are oxidised to a cystine.

As to quaternary structure, homotetramer; disulfide-linked. Dimer of dimers, giving rise to a V-shaped homotretramer. Isoform 1 and isoform 3 interact with RTN4R. Identified in a complex with RTN4R and LINGO1. Peripherally associated with AMPAR complex. AMPAR complex consists of an inner core made of 4 pore-forming GluA/GRIA proteins (GRIA1, GRIA2, GRIA3 and GRIA4) and 4 major auxiliary subunits arranged in a twofold symmetry. One of the two pairs of distinct binding sites is occupied either by CNIH2, CNIH3 or CACNG2, CACNG3. The other harbors CACNG2, CACNG3, CACNG4, CACNG8 or GSG1L. This inner core of AMPAR complex is complemented by outer core constituents binding directly to the GluA/GRIA proteins at sites distinct from the interaction sites of the inner core constituents. Outer core constituents include at least PRRT1, PRRT2, CKAMP44/SHISA9, FRRS1L and NRN1. The proteins of the inner and outer core serve as a platform for other, more peripherally associated AMPAR constituents, including OLFM1. Alone or in combination, these auxiliary subunits control the gating and pharmacology of the AMPAR complex and profoundly impact their biogenesis and protein processing. Interacts with OLFM2. Post-translationally, in isoform 3 and isoform 4, the signal peptide is predicted to end in position 17. As to expression, expressed in the brain (at protein level). Expressed in the brain, predominantly in the cortex and hippocampus. In the pituitary only the two A-type and in the adrenal glands only the two B-type forms were detected.

The protein localises to the secreted. The protein resides in the synapse. It is found in the endoplasmic reticulum. It localises to the cell projection. Its subcellular location is the axon. The protein localises to the perikaryon. Its function is as follows. Contributes to the regulation of axonal growth in the embryonic and adult central nervous system by inhibiting interactions between RTN4R and LINGO1. Inhibits RTN4R-mediated axon growth cone collapse. May play an important role in regulating the production of neural crest cells by the neural tube. May be required for normal responses to olfactory stimuli. The sequence is that of Noelin (Olfm1) from Rattus norvegicus (Rat).